The chain runs to 297 residues: 4-diphosphocytidyl-2-C-methyl-D-erythritol kinase (297 aa).

K19 is a catalytic residue. 105-115 (PIASGIGGGSA) lines the ATP pocket. The active site involves D147.

Belongs to the GHMP kinase family. IspE subfamily.

It catalyses the reaction 4-CDP-2-C-methyl-D-erythritol + ATP = 4-CDP-2-C-methyl-D-erythritol 2-phosphate + ADP + H(+). The protein operates within isoprenoid biosynthesis; isopentenyl diphosphate biosynthesis via DXP pathway; isopentenyl diphosphate from 1-deoxy-D-xylulose 5-phosphate: step 3/6. Functionally, catalyzes the phosphorylation of the position 2 hydroxy group of 4-diphosphocytidyl-2C-methyl-D-erythritol. The sequence is that of 4-diphosphocytidyl-2-C-methyl-D-erythritol kinase from Rhizobium etli (strain CIAT 652).